Here is a 613-residue protein sequence, read N- to C-terminus: Azole resistance protein 1 (613 aa).

Residues 1-38 (MKGEPKTYSMSDLSYYGEKAQQQNEKQQKQYVVRRNST) are disordered. Residues 1 to 70 (MKGEPKTYSM…PKGFILYASL (70 aa)) are Extracellular-facing. The chain crosses the membrane as a helical span at residues 71–91 (IALALSLFLAALDIMIVSTII). Residues 92-102 (EEVAKQFGSYS) lie on the Cytoplasmic side of the membrane. A helical membrane pass occupies residues 103 to 123 (EIGWLFTGYSLPNALLALIWG). The Extracellular portion of the chain corresponds to 124–134 (RIATPIGFKET). The helical transmembrane segment at 135-155 (MLFAIVIFEIGSLISALANSM) threads the bilayer. The Cytoplasmic portion of the chain corresponds to 156-163 (SMLIGGRV). A helical transmembrane segment spans residues 164 to 184 (IAGVGGCGIQSLSFVIGSTLV). The Extracellular segment spans residues 185 to 189 (EESQR). Residues 190–210 (GILIAVLSCSFAIASVVGPFL) traverse the membrane as a helical segment. Residues 211 to 221 (GGVFTSSVTWR) lie on the Cytoplasmic side of the membrane. The chain crosses the membrane as a helical span at residues 222-242 (WCFYVNLPIGGLAFFLFLFFY). Over 243–298 (NPGLSTFQETMDNIRKFPSQFIEIVRNVAYHLLKIKGFSKLNGWRKPFMELIFMYD) the chain is Extracellular. Residues 299-319 (IIEFVFCSAGFTCILLAFTFG) form a helical membrane-spanning segment. Residues 320-329 (GNRYAWNSAS) are Cytoplasmic-facing. A helical transmembrane segment spans residues 330–350 (IIILFIIGIVLVVLAGIYDFL). At 351–375 (VFPKFNIVKATPHYQPLMSWTNIKK) the chain is on the extracellular side. A helical membrane pass occupies residues 376–396 (PGIFTVNIALFLTCAGYISQF). Residues 397–414 (TYIVQYFQLIYNDSAWRA) lie on the Cytoplasmic side of the membrane. A helical membrane pass occupies residues 415 to 435 (AVHLVACIISTVVTAILCGAI). At 436-443 (TDKTRQIK) the chain is on the extracellular side. A helical membrane pass occupies residues 444–464 (PIIVISSIFGVVGAGILTLLN). Residues 465–472 (NNANNSAH) are Cytoplasmic-facing. A helical transmembrane segment spans residues 473–493 (IGLLILPGVAFGGLAQSSMLA). Residues 494–581 (SQIQLDKKSP…SKLGNIISES (88 aa)) are Extracellular-facing. Residues 582–602 (LTDVFYMALGFYALSLIFAVF) traverse the membrane as a helical segment. At 603–613 (ASNKKVTASLR) the chain is on the cytoplasmic side.

It belongs to the major facilitator superfamily.

Its subcellular location is the cell membrane. Its function is as follows. Transporter protein required for adaptation to high stress imposed by low-chain organic acids, in particular by acetic acid, and for resistance to azoles, especially to ketoconazole and fluconazole. This Saccharomyces cerevisiae (strain ATCC 204508 / S288c) (Baker's yeast) protein is Azole resistance protein 1 (AZR1).